Here is a 961-residue protein sequence, read N- to C-terminus: Glycine dehydrogenase (decarboxylating) (961 aa).

Residue Lys709 is modified to N6-(pyridoxal phosphate)lysine.

This sequence belongs to the GcvP family. The glycine cleavage system is composed of four proteins: P, T, L and H. Requires pyridoxal 5'-phosphate as cofactor.

The catalysed reaction is N(6)-[(R)-lipoyl]-L-lysyl-[glycine-cleavage complex H protein] + glycine + H(+) = N(6)-[(R)-S(8)-aminomethyldihydrolipoyl]-L-lysyl-[glycine-cleavage complex H protein] + CO2. The glycine cleavage system catalyzes the degradation of glycine. The P protein binds the alpha-amino group of glycine through its pyridoxal phosphate cofactor; CO(2) is released and the remaining methylamine moiety is then transferred to the lipoamide cofactor of the H protein. This Teredinibacter turnerae (strain ATCC 39867 / T7901) protein is Glycine dehydrogenase (decarboxylating).